The sequence spans 124 residues: MALKIRLARGGSKKRPYYQIVVADARSPRDGRFLEKLGSWNPMLAKDDEKRIELNAERVQHWIAQGAQPTDRVMRFLDQAGLAKRPARNNPTKAQPGKKAQERAAEAKQKAEEAAAAASEAAAE.

Residues 80–124 (AGLAKRPARNNPTKAQPGKKAQERAAEAKQKAEEAAAAASEAAAE) are disordered. Positions 99 to 113 (KAQERAAEAKQKAEE) are enriched in basic and acidic residues. The span at 114 to 124 (AAAAASEAAAE) shows a compositional bias: low complexity.

This sequence belongs to the bacterial ribosomal protein bS16 family.

The sequence is that of Small ribosomal subunit protein bS16 from Rhizobium meliloti (strain 1021) (Ensifer meliloti).